The primary structure comprises 583 residues: AP-1-like transcription factor YAP1 (583 aa).

Positions 1–86 (MSTSTAKRPF…KELEDKVSQL (86 aa)) are disordered. A compositionally biased stretch (basic and acidic residues) spans 8-17 (RPFDNKRAGS). Positions 24–36 (SDSGGNNSGSSPA) are enriched in low complexity. Residues 37–46 (SKRRERKPGR) are compositionally biased toward basic residues. Positions 41-48 (ERKPGRKP) match the Bipartite nuclear localization signal motif. Composition is skewed to basic and acidic residues over residues 47 to 58 (KPLETEAKDKRT) and 67 to 84 (AFRE…DKVS). One can recognise a bZIP domain in the interval 51 to 114 (TEAKDKRTAQ…TNLLSELKRY (64 aa)). Residues 54–77 (KDKRTAQNRAAQRAFRERRERKMK) are basic motif. Positions 79-86 (LEDKVSQL) are leucine-zipper. Positions 120 to 127 (KKRDSILL) match the Bipartite nuclear localization signal motif. Residues 177-195 (SKIPSPSSDSTSPSASTSI) show a composition bias toward low complexity. The disordered stretch occupies residues 177–233 (SKIPSPSSDSTSPSASTSILDNANNKSVSSTNLNHSRSSISNSSSSPSNVNGLSSRK). Polar residues predominate over residues 196–207 (LDNANNKSVSST). Over residues 208-230 (NLNHSRSSISNSSSSPSNVNGLS) the composition is skewed to low complexity. Positions 265–272 (CSKLSMAC) are n-CRD. 2 disulfide bridges follow: cysteine 265–cysteine 531 and cysteine 272–cysteine 562. 2 disordered regions span residues 275–329 (KSNP…SASA) and 350–373 (QYND…VSAW). Over residues 297 to 312 (KSNSNVNITNHNNNKI) the composition is skewed to low complexity. Over residues 316–329 (DLSSSAPLHDSASA) the composition is skewed to polar residues. The tract at residues 531–562 (CSEVWDRITAHPRYSDLDIDGLCLELRTKAKC) is c-CRD. The Nuclear export signal signature appears at 547-554 (LDIDGLCL).

This sequence belongs to the bZIP family. YAP subfamily. In terms of processing, oxidative stress induces conformational changes through oxidation of cysteine residues, masking the nuclear export signal, thus abolishing nuclear export by CRM1/exportin 1.

It is found in the nucleus. The protein localises to the cytoplasm. In terms of biological role, transcription activator involved in oxidative stress response and cadmium resistance. Regulates the transcription of genes encoding antioxidant enzymes and components of the cellular thiol-reducing pathways. Activity of the transcription factor is controlled through oxidation of specific cysteine residues resulting in the alteration of its subcellular location. Activation by alkyl hydroperoxides or cadmium induces nuclear accumulation and as a result YAP1 transcriptional activity. This Kluyveromyces lactis (strain ATCC 8585 / CBS 2359 / DSM 70799 / NBRC 1267 / NRRL Y-1140 / WM37) (Yeast) protein is AP-1-like transcription factor YAP1 (YAP1).